A 582-amino-acid chain; its full sequence is MSSDDQFTSIQWDRDELGPNKETKVNKQETITEDDEHHNNDNEDKDNDTTKSNEPENIQEDDETKDDNEPTDSLILSKTGDENISNIESQNEGDHIVGEPDVNQEPSSDSQTEAYEINVVVTSPLRDLDSSSKPYISYLLTTATNHPSVMKLSTVKKEQGKEVVEITARRRYGDFRFLFDCLSNDHPEVMMPPLPSKSNFKYLTGDTFSTEFVHKRLHSLDRFVRFITCHKVLSQSSIFHLFVSDSADWSTFQKNLKISKVGVQESDADKGNSSMTSNVVNKVVNEDLLTETIMNFLTPSKHKRETNKEILEISDKLKKLYENLIKLDKIFTKLNKKNHDLSVDYEQFSQQIMKLSVIQNSSDETNEPTTPEINEQKQFATNFKVFASSLSYFSDNWSNLHKYIDESFLVSLKDCAKYIISLTNLIELQHNKKIDLQVLQDYLNKAKSELQGLGGSHNAPPNPIITHNNGGIVNNTTQLIRDTLSTSATPNIGSSVTESKVTKLQNRITELENEISVQSQLVLDLTNKIINEEYPNWDKFNKIELKESLLGLCNEEISFYKGLVDNWSDIELKLLKRLDELK.

Polar residues predominate over residues 1 to 11 (MSSDDQFTSIQ). The tract at residues 1–111 (MSSDDQFTSI…VNQEPSSDSQ (111 aa)) is disordered. 2 stretches are compositionally biased toward basic and acidic residues: residues 12–27 (WDRD…KVNK) and 35–54 (DEHH…KSNE). Residues 57–70 (NIQEDDETKDDNEP) show a composition bias toward acidic residues. In terms of domain architecture, PX spans 116–249 (EINVVVTSPL…HLFVSDSADW (134 aa)). The a 1,2-diacyl-sn-glycero-3-phospho-(1D-myo-inositol-3-phosphate) site is built by arginine 171, lysine 197, and arginine 216. 2 coiled-coil regions span residues 300-329 (SKHK…KLDK) and 494-529 (SSVT…TNKI).

The protein belongs to the sorting nexin family.

It localises to the cytoplasm. Its subcellular location is the cytosol. The protein resides in the preautophagosomal structure membrane. The protein localises to the endosome membrane. In terms of biological role, sorting nexin, involved in the separation or division of vacuoles throughout the entire life cycle of the cells. Involved in retrieval of late-Golgi SNAREs from post-Golgi endosomes to the trans-Golgi network, for cytoplasm to vacuole transport (Cvt), and autophagy of large cargos including mitophagy, pexophagy and glycophagy. In Debaryomyces hansenii (strain ATCC 36239 / CBS 767 / BCRC 21394 / JCM 1990 / NBRC 0083 / IGC 2968) (Yeast), this protein is Sorting nexin-4 (SNX4).